A 93-amino-acid polypeptide reads, in one-letter code: Putative nuclease p44 (93 aa).

Residues 5-84 form the VRR-NUC domain; the sequence is REDSIEKHLV…HQVIVLDSQD (80 aa).

It depends on Mg(2+) as a cofactor.

Its function is as follows. Nuclease. This Escherichia coli (Bacteriophage APSE-1) protein is Putative nuclease p44 (44).